Consider the following 535-residue polypeptide: Light-independent protochlorophyllide reductase subunit B (535 aa).

Asp-36 contacts [4Fe-4S] cluster. Asp-292 functions as the Proton donor in the catalytic mechanism. 428-429 provides a ligand contact to substrate; that stretch reads GL. The tract at residues 446–483 is disordered; that stretch reads DEASPSESAPHASNGHEDVAGGSTAQSVPSHAATEGDG.

Belongs to the ChlB/BchB/BchZ family. As to quaternary structure, protochlorophyllide reductase is composed of three subunits; BchL, BchN and BchB. Forms a heterotetramer of two BchB and two BchN subunits. [4Fe-4S] cluster serves as cofactor.

The catalysed reaction is chlorophyllide a + oxidized 2[4Fe-4S]-[ferredoxin] + 2 ADP + 2 phosphate = protochlorophyllide a + reduced 2[4Fe-4S]-[ferredoxin] + 2 ATP + 2 H2O. It functions in the pathway porphyrin-containing compound metabolism; bacteriochlorophyll biosynthesis (light-independent). In terms of biological role, component of the dark-operative protochlorophyllide reductase (DPOR) that uses Mg-ATP and reduced ferredoxin to reduce ring D of protochlorophyllide (Pchlide) to form chlorophyllide a (Chlide). This reaction is light-independent. The NB-protein (BchN-BchB) is the catalytic component of the complex. In Chlorobium limicola (strain DSM 245 / NBRC 103803 / 6330), this protein is Light-independent protochlorophyllide reductase subunit B.